Reading from the N-terminus, the 493-residue chain is Ectonucleoside triphosphate diphosphohydrolase 8 (493 aa).

Topologically, residues 1–7 (MEYKGKV) are cytoplasmic. A helical transmembrane segment spans residues 8–28 (VAGLLTATCVFSIIALILSAV). At 29–463 (DVKDVFLPPG…ALEHVKGHEP (435 aa)) the chain is on the extracellular side. Asn-65, Asn-79, and Asn-133 each carry an N-linked (GlcNAc...) asparagine glycan. Cys-76 and Cys-100 are disulfide-bonded. Glu-166 functions as the Proton acceptor in the catalytic mechanism. Asn-223, Asn-234, Asn-267, Asn-324, Asn-330, Asn-361, Asn-372, Asn-382, and Asn-445 each carry an N-linked (GlcNAc...) asparagine glycan. A disulfide bridge connects residues Cys-244 and Cys-291. Cys-327 and Cys-333 are disulfide-bonded. A disulfide bond links Cys-379 and Cys-401. A helical membrane pass occupies residues 464–486 (SLWAGAISFIVLAIVAGLVAILL). Over 487–493 (QCFWKSK) the chain is Cytoplasmic.

It belongs to the GDA1/CD39 NTPase family. The cofactor is Ca(2+). Mg(2+) serves as cofactor. In terms of processing, N-glycosylated.

The protein localises to the cell membrane. The enzyme catalyses a ribonucleoside 5'-triphosphate + 2 H2O = a ribonucleoside 5'-phosphate + 2 phosphate + 2 H(+). Its function is as follows. Canalicular ectonucleoside NTPDase responsible for the main hepatic NTPDase activity. Ectonucleoside ATPases catalyze the hydrolysis of gamma- and beta-phosphate residues of nucleotides, playing a central role in concentration of extracellular nucleotides. The polypeptide is Ectonucleoside triphosphate diphosphohydrolase 8 (ENTPD8) (Gallus gallus (Chicken)).